Here is a 525-residue protein sequence, read N- to C-terminus: GMP synthase [glutamine-hydrolyzing] (525 aa).

The Glutamine amidotransferase type-1 domain maps to 8–207 (KILILDFGSQ…ALDICQCEAN (200 aa)). Cysteine 85 acts as the Nucleophile in catalysis. Active-site residues include histidine 181 and glutamate 183. The GMPS ATP-PPase domain maps to 208-400 (WKPSSIIEDA…LGLPYNMLYR (193 aa)). 235–241 (SGGVDSS) contacts ATP.

As to quaternary structure, homodimer.

The enzyme catalyses XMP + L-glutamine + ATP + H2O = GMP + L-glutamate + AMP + diphosphate + 2 H(+). The protein operates within purine metabolism; GMP biosynthesis; GMP from XMP (L-Gln route): step 1/1. Its function is as follows. Catalyzes the synthesis of GMP from XMP. The chain is GMP synthase [glutamine-hydrolyzing] from Shewanella loihica (strain ATCC BAA-1088 / PV-4).